The chain runs to 513 residues: t-SNARE domain-containing protein 1 (513 aa).

Disordered stretches follow at residues 1–23 (MSYG…GPSR) and 49–128 (ESKL…KPNF). Over residues 7 to 19 (ARGGGLGSRGPFG) the composition is skewed to gly residues. Ser378 carries the post-translational modification Phosphoserine. One can recognise a t-SNARE coiled-coil homology domain in the interval 416 to 478 (LEAIRLREEA…EAARQLLAGA (63 aa)). Residues 491 to 511 (CFLSAGVTALLVIIIIIATSV) traverse the membrane as a helical segment.

The protein resides in the membrane. This Homo sapiens (Human) protein is t-SNARE domain-containing protein 1 (TSNARE1).